Consider the following 259-residue polypeptide: Ribonuclease PH (259 aa).

Phosphate-binding positions include Arg88 and 126–128 (GTR).

Belongs to the RNase PH family. Homohexameric ring arranged as a trimer of dimers.

It carries out the reaction tRNA(n+1) + phosphate = tRNA(n) + a ribonucleoside 5'-diphosphate. Functionally, phosphorolytic 3'-5' exoribonuclease that plays an important role in tRNA 3'-end maturation. Removes nucleotide residues following the 3'-CCA terminus of tRNAs; can also add nucleotides to the ends of RNA molecules by using nucleoside diphosphates as substrates, but this may not be physiologically important. Probably plays a role in initiation of 16S rRNA degradation (leading to ribosome degradation) during starvation. This Mycobacterium avium (strain 104) protein is Ribonuclease PH.